We begin with the raw amino-acid sequence, 355 residues long: Transcription factor TCP13 (355 aa).

The segment at 1–57 (MNIVSWKDANDEVAGGATTRREREVKEDQEETEVRATSGKTVIKKQPTSISSSSSSW) is disordered. The 59-residue stretch at 74-132 (GKDRHSKVCTLRGLRDRRVRLSVPTAIQLYDLQERLGVDQPSKAVDWLLDAAKEEIDEL) folds into the TCP domain. The disordered stretch occupies residues 329 to 355 (TNSTTTANMSRHLGSERCTSRGSDHHM). Positions 341–355 (LGSERCTSRGSDHHM) are enriched in basic and acidic residues.

In terms of assembly, interacts with AHL27 and AHL29. Interacts with SPL. Interacts with KIN10; KIN11 and FLZ3. As to expression, expressed in cotyledons, particularly in the vascular region, in leaves, buds, flowers and immature siliques, and, to a lower extent, in roots.

The protein resides in the nucleus. It is found in the plastid. The protein localises to the chloroplast. Its function is as follows. Plays a pivotal role in the control of morphogenesis of shoot organs by negatively regulating the expression of boundary-specific genes such as CUC genes, probably through the induction of miRNA (e.g. miR164). Binds to the 3'-ACC-5' repeats in the light-responsive promoter (LRP) of psbD, and activates its transcription. Participates in ovule development. In Arabidopsis thaliana (Mouse-ear cress), this protein is Transcription factor TCP13 (TCP13).